Here is a 336-residue protein sequence, read N- to C-terminus: Potassium channel subfamily K member 1 (336 aa).

Residues 1–20 (MLQSLAGSSCVRLVERHRSA) lie on the Cytoplasmic side of the membrane. Residues 21–41 (WCFGFLVLGYLLYLVFGAVVF) traverse the membrane as a helical segment. At 42–103 (SSVELPYEDL…SNASGNWNWD (62 aa)) the chain is on the extracellular side. Asn-95 is a glycosylation site (N-linked (GlcNAc...) asparagine). Positions 104–116 (FTSALFFASTVLS) form an intramembrane region, helical. The stretch at 117 to 122 (TTGYGH) is an intramembrane region. The tract at residues 117–122 (TTGYGH) is selectivity filter 1. The Extracellular portion of the chain corresponds to 123–132 (TVPLSDGGKA). Residues 133–156 (FCIIYSVIGIPFTLLFLTAVVQRV) traverse the membrane as a helical segment. Topologically, residues 157-181 (TVHVTRRPVLYFHIRWGFSKQVVAI) are cytoplasmic. The chain crosses the membrane as a helical span at residues 182 to 202 (VHAVLLGFVTVSCFFFIPAAV). The Extracellular portion of the chain corresponds to 203-211 (FSVLEDDWN). Residues 212–224 (FLESFYFCFISLS) constitute an intramembrane region (helical). The interval 225–230 (TIGLGD) is selectivity filter 2. Residues 225–231 (TIGLGDY) lie within the membrane without spanning it. Topologically, residues 232-243 (VPGEGYNQKFRE) are extracellular. Residues 244-267 (LYKIGITCYLLLGLIAMLVVLETF) traverse the membrane as a helical segment. Over 268-336 (CELHELKKFR…PPYEDGSANH (69 aa)) the chain is Cytoplasmic. A Glycyl lysine isopeptide (Lys-Gly) (interchain with G-Cter in SUMO) cross-link involves residue Lys-274. Positions 293–299 (IMEHDQL) are important for intracellular retention in recycling endosomes. The disordered stretch occupies residues 310–336 (GLKEEQKQNEPFVASQSPPYEDGSANH). Ser-326 carries the post-translational modification Phosphoserine.

It belongs to the two pore domain potassium channel (TC 1.A.1.8) family. Homodimer; disulfide-linked. Heterodimer with KCNK2; disulfide-linked. In astrocytes, forms mostly heterodimeric potassium channels with KCNK2, with only a minor proportion of functional channels containing homodimeric KCNK1. Interacts with KCNK3 and KCNK9, forming functional heterodimeric channels. Interacts with GNG4. Identified in a complex with PSD and ARF6; interacts only with PSD that is bound to ARF6. Interacts with UBE2I. Post-translationally, sumoylation is controversial. Sumoylated by UBE2I. Not sumoylated when expressed in xenopus oocytes or mammalian cells. Sumoylation inactivates the channel, but does not interfere with expression at the cell membrane. Sumoylation of a single subunit is sufficient to silence the dimeric channel. Sumoylation of KCNK1 is sufficient to silence heterodimeric channels formed by KCNK1 and KCNK3 or KCNK9. Desumoylated by SENP1; this activates the channel. Desumoylated by SENP1; this strongly increases halothane-mediated activation of heterodimeric channels formed with KCNK9. SENP1 treatment has no effect. Detected in brain and in kidney cortex and medulla, especially at the renal brush border membranes of the proximal convoluted tubules, in distal tubules and on intercalated cells of the collecting duct. Detected in cerebellum granule neurons. Detected in astrocytes in hippocampus stratum radiatum. Highly expressed in the stria vascularis in the cochlea. Detected in neurons in Scarpa's ganglion in the inner ear, at nerve terminals in the crista ampullaris, in supporting cells and dark cells, but not in hair cells (at protein level). Detected in the brain cerebellar granule cell layer, amygdala, thalamus reticular nucleus, habenula, mesencephalic trigeminal neurons, neocortex and piriform cortex, and at lower levels in the olfactory bulb. Detected in Scarpa's ganglia and crista ampullaris in the inner ear.

Its subcellular location is the cell membrane. It localises to the recycling endosome. The protein resides in the apical cell membrane. The protein localises to the cytoplasmic vesicle. It is found in the perikaryon. Its subcellular location is the cell projection. It localises to the dendrite. The protein resides in the synaptic cell membrane. The catalysed reaction is K(+)(in) = K(+)(out). The enzyme catalyses NH4(+)(in) = NH4(+)(out). It catalyses the reaction Na(+)(in) = Na(+)(out). It carries out the reaction Rb(+)(in) = Rb(+)(out). The catalysed reaction is Cs(+)(in) = Cs(+)(out). The enzyme catalyses Li(+)(in) = Li(+)(out). It catalyses the reaction L-glutamate(out) = L-glutamate(in). It carries out the reaction chloride(in) = chloride(out). Inhibited by 100 uM quinine. Slightly inhibited by Ba(+). Activity is first increased and then decreased when the extracellular pH is lowered to 6.0. In terms of biological role, ion channel that contributes to passive transmembrane potassium transport and to the regulation of the resting membrane potential in brain astrocytes, but also in kidney and in other tissues. Forms dimeric channels through which potassium ions pass in accordance with their electrochemical gradient. The channel is selective for K(+) ions at physiological potassium concentrations and at neutral pH, but becomes permeable to Na(+) at subphysiological K(+) levels and upon acidification of the extracellular medium. The homodimer has very low potassium channel activity, when expressed in heterologous systems, and can function as weakly inward rectifying potassium channel. Channel activity is modulated by activation of serotonin receptors. Heterodimeric channels containing KCNK1 and KCNK2 have much higher activity, and may represent the predominant form in astrocytes. Heterodimeric channels containing KCNK1 and KCNK3 or KCNK9 have much higher activity. Heterodimeric channels formed by KCNK1 and KCNK9 may contribute to halothane-sensitive currents. Mediates outward rectifying potassium currents in dentate gyrus granule cells and contributes to the regulation of their resting membrane potential. Contributes to the regulation of action potential firing in dentate gyrus granule cells and down-regulates their intrinsic excitability. Contributes to the regulation of the resting membrane potential of pancreatic beta cells. In astrocytes, the heterodimer formed by KCNK1 and KCNK2 is required for rapid glutamate release in response to activation of G-protein coupled receptors, such as F2R and CNR1. Required for normal ion and water transport in the kidney. The low channel activity of homodimeric KCNK1 may be due to sumoylation. The low channel activity may be due to rapid internalization from the cell membrane and retention in recycling endosomes. Permeable to monovalent cations with ion selectivity for K(+) &gt; Rb(+) &gt;&gt; NH4(+) &gt;&gt; Cs(+) = Na(+) = Li(+). The chain is Potassium channel subfamily K member 1 from Rattus norvegicus (Rat).